Reading from the N-terminus, the 334-residue chain is N-acetyl-S-alkylcysteine monooxygenase (334 aa).

The protein to bacterial alkanal monooxygenase alpha and beta chains.

The enzyme catalyses N-acetyl-S-benzyl-L-cysteine + FMNH2 + O2 = (R)-N-acetyl-S-benzyl-L-cysteine sulfoxide + FMN + H2O + H(+). It carries out the reaction N-acetyl-S-methyl-L-cysteine + FMNH2 + O2 = (R)-N-acetyl-S-methyl-L-cysteine sulfoxide + FMN + H2O + H(+). It participates in amino-acid metabolism. Its function is as follows. Involved in a cysteine salvage pathway from S-alkylcysteine. Catalyzes the oxidation of N-acetyl-S-benzyl-L-cysteine and N-acetyl-S-methyl-L-cysteine to (R)-N-acetyl-S-benzyl-L-cysteine sulfoxide and (R)-N-acetyl-S-methyl-L-cysteine sulfoxide, respectively. This pathway is likely important in the catabolism of alkylated cysteine generated by proteolysis of alkylated glutathione formed in the detoxification of a wide range of electrophiles. The sequence is that of N-acetyl-S-alkylcysteine monooxygenase from Bacillus subtilis (strain 168).